Here is a 325-residue protein sequence, read N- to C-terminus: Ribosomal RNA small subunit methyltransferase H (325 aa).

S-adenosyl-L-methionine-binding positions include 45–47 (GGH), D65, Y92, D113, and Q120.

It belongs to the methyltransferase superfamily. RsmH family.

The protein localises to the cytoplasm. It catalyses the reaction cytidine(1402) in 16S rRNA + S-adenosyl-L-methionine = N(4)-methylcytidine(1402) in 16S rRNA + S-adenosyl-L-homocysteine + H(+). Its function is as follows. Specifically methylates the N4 position of cytidine in position 1402 (C1402) of 16S rRNA. This chain is Ribosomal RNA small subunit methyltransferase H, found in Oleidesulfovibrio alaskensis (strain ATCC BAA-1058 / DSM 17464 / G20) (Desulfovibrio alaskensis).